The sequence spans 299 residues: Acetaldehyde dehydrogenase (299 aa).

Cys126 serves as the catalytic Acyl-thioester intermediate. Residues 157 to 165 (SAGPGTRQN) and Asn267 contribute to the NAD(+) site.

This sequence belongs to the acetaldehyde dehydrogenase family.

It catalyses the reaction acetaldehyde + NAD(+) + CoA = acetyl-CoA + NADH + H(+). This Carboxydothermus hydrogenoformans (strain ATCC BAA-161 / DSM 6008 / Z-2901) protein is Acetaldehyde dehydrogenase (mhpF).